The chain runs to 94 residues: Neutrophil defensin 3 (94 aa).

A signal peptide spans 1-19 (MRTLAILAAILLVALQAQA). A propeptide spanning residues 20–38 (EPLQARADEVAAAPEQIAA) is cleaved from the precursor. Intrachain disulfides connect Cys66–Cys94, Cys68–Cys83, and Cys73–Cys93.

Belongs to the alpha-defensin family. As to quaternary structure, dimer. (Microbial infection) Interacts with herpes virus 1 HHV-1 envelope glycoprotein B; this interaction inhibits viral infection.

It localises to the secreted. Its function is as follows. Effector molecule of the innate immune system that acts via antibiotic-like properties against a broad array of infectious agents including bacteria, fungi, and viruses. Possesses the ability to neutralize bacterial toxins such as B.anthracis lethal factor, Clostridium difficile cytotoxin B as well as leukocidin produced by Staphylococcus aureus. Also blocks herpes simplex virus infection by interacting with envelope glycoprotein B and thus preventing its binding to heparan sulfate, the receptor for attachment. In Homo sapiens (Human), this protein is Neutrophil defensin 3 (DEFA3).